A 402-amino-acid chain; its full sequence is Beta-ketoacyl-[acyl-carrier-protein] synthase III B, chloroplastic (402 aa).

Residues cysteine 178, histidine 328, and asparagine 358 contribute to the active site.

It belongs to the thiolase-like superfamily. FabH family.

It localises to the plastid. It is found in the chloroplast. It catalyses the reaction malonyl-[ACP] + acetyl-CoA + H(+) = 3-oxobutanoyl-[ACP] + CO2 + CoA. The protein operates within lipid metabolism; fatty acid biosynthesis. Its function is as follows. Catalyzes the condensation reaction of fatty acid synthesis by the addition to an acyl acceptor of two carbons from malonyl-ACP. KAS III catalyzes the first condensation reaction which initiates fatty acid synthesis and may therefore play a role in governing the total rate of fatty acid production. Possesses both acetoacetyl-ACP synthase and acetyl transacylase activities. The polypeptide is Beta-ketoacyl-[acyl-carrier-protein] synthase III B, chloroplastic (KAS3B) (Cuphea wrightii (Wright's waxweed)).